Consider the following 1044-residue polypeptide: MFKKVESKVNFPKIEERILKFWNDNKIFEKSIQQREGCEEFTFYDGPPFATGLPHFGHFVPNTIKDIIPRYKTMKGKQVKRYFGWDTHGLPVEYEVEKSLKISGRYEIEKYGIDKFNEECRKIVLRYTKEWQKTISRLGRWIDFENNYKTMDTTFMESVWWVFQTLYNKGLIYESYYVLPYSPKLATPLSNFEVNLGEYKEIHDPSLTIKFKIKDKNEYLLAWTTTPWTLPTNLGIAVGKDIDYSKIFDKEKDETFIIGTKRLNHYYKDEKAYTVIEQFKGEYIKGIEYEPIFNYFLNQRDKGAFKIHTAEYVTTDDGTGIVHIAPFGEEDYNILKNNTKTDMITPIDAECRFTNEVKDFEGLFVKDADNKIIEKLKSMNLLFKRENFLHRYPFCYRTNSPLIYRPISSWFVNIEAIKEKLIKSNEQINWMPSHLKKGRFGKWLENARDWAISRNRFWGNPIPVWICSKTGNKICIGSKEELERLSGQKVNDLHKDKVDKITWPSEYGGVYVRTSEVLDCWFESGSMPYASKHYPFKDKDNFHNIFPADFIAEGLDQTRGWFYTLTILGTALFENTAFKNVIVNGLVLSSDGRKMSKSLRNYTDPMEVINTFGADALRLYLVMSPVIRADDLKYSDDGVKDVLKNIIIPIWNAYSFFITYAIIDKFEPNNNINLHKTNILDKWIVSEIESLKKILNEEIDKYNLTKSIEELLAFIDKLNNWYIRRSRRRFWKSENDNDKIDAHETLYYVIKNLMLMLAPFIPFLTEEIYQNLKTKDEKESIHLNKYPQAIEKLINIDLEEKMNFIRKVVSIARALRASHNIKIRKPISTIYVVTKDQKEQQILNEMKEIILEEINAKEIKIKSNEEELVTYKAKANFRELGSKLGVNMKVGSLEIMKLTNEDILKIINGNKHIIKINENTYNITLKDIILERHERENLKIINEDSVTIGLDALITEELYLEGLSRELIRKVQNLRKENNFNVSDRIILYIDNSDILKKITNQFESYIKTETLTLKIEINKEKALTNVELDDAIFIKIGIKRWSN.

Residues 48–58 (PFATGLPHFGH) carry the 'HIGH' region motif. The 'KMSKS' region motif lies at 594–598 (KMSKS). Lys-597 lines the ATP pocket.

This sequence belongs to the class-I aminoacyl-tRNA synthetase family. IleS type 2 subfamily. In terms of assembly, monomer. It depends on Zn(2+) as a cofactor.

It is found in the cytoplasm. The catalysed reaction is tRNA(Ile) + L-isoleucine + ATP = L-isoleucyl-tRNA(Ile) + AMP + diphosphate. Functionally, catalyzes the attachment of isoleucine to tRNA(Ile). As IleRS can inadvertently accommodate and process structurally similar amino acids such as valine, to avoid such errors it has two additional distinct tRNA(Ile)-dependent editing activities. One activity is designated as 'pretransfer' editing and involves the hydrolysis of activated Val-AMP. The other activity is designated 'posttransfer' editing and involves deacylation of mischarged Val-tRNA(Ile). The sequence is that of Isoleucine--tRNA ligase from Borrelia turicatae (strain 91E135).